A 40-amino-acid chain; its full sequence is Antimicrobial peptide 2 (40 aa).

Residues 1 to 40 enclose the Chitin-binding type-1 domain; it reads AQCGAQGGGATCPGGLCCSQWGWCGSTPKYCGAGCQSNCR. Intrachain disulfides connect Cys-3-Cys-18, Cys-12-Cys-24, Cys-17-Cys-31, and Cys-35-Cys-39.

Not glycosylated.

In terms of biological role, antimicrobial peptide active against plant pathogenic fungi and Gram-negative and -positive bacteria. In Fagopyrum esculentum (Common buckwheat), this protein is Antimicrobial peptide 2.